We begin with the raw amino-acid sequence, 381 residues long: Cobalt-precorrin-5B C(1)-methyltransferase (381 aa).

This sequence belongs to the CbiD family.

It catalyses the reaction Co-precorrin-5B + S-adenosyl-L-methionine = Co-precorrin-6A + S-adenosyl-L-homocysteine. It participates in cofactor biosynthesis; adenosylcobalamin biosynthesis; cob(II)yrinate a,c-diamide from sirohydrochlorin (anaerobic route): step 6/10. Functionally, catalyzes the methylation of C-1 in cobalt-precorrin-5B to form cobalt-precorrin-6A. The chain is Cobalt-precorrin-5B C(1)-methyltransferase from Clostridium botulinum (strain Alaska E43 / Type E3).